A 506-amino-acid polypeptide reads, in one-letter code: F-box protein At4g02760 (506 aa).

In terms of domain architecture, F-box spans 115–161 (TSWPLLPELTIKVFSMLDTKSLMQASACCTMFNKCAMDRVCYSHIDL). The disordered stretch occupies residues 452-506 (TFVAEFRSPSPSESDVRSPSPSSSSDSSSSSDSSSSSSSGESSDESGTEEEEDED). Residues 459–492 (SPSPSESDVRSPSPSSSSDSSSSSDSSSSSSSGE) are compositionally biased toward low complexity. The segment covering 493-506 (SSDESGTEEEEDED) has biased composition (acidic residues).

In Arabidopsis thaliana (Mouse-ear cress), this protein is F-box protein At4g02760.